The chain runs to 87 residues: Small ribosomal subunit protein eS21B (87 aa).

N-acetylmethionine is present on Met1.

It belongs to the eukaryotic ribosomal protein eS21 family. Component of the small ribosomal subunit (SSU). Mature yeast ribosomes consist of a small (40S) and a large (60S) subunit. The 40S small subunit contains 1 molecule of ribosomal RNA (18S rRNA) and 33 different proteins (encoded by 57 genes). The large 60S subunit contains 3 rRNA molecules (25S, 5.8S and 5S rRNA) and 46 different proteins (encoded by 81 genes). N-terminally acetylated by acetyltransferase NatB.

Its subcellular location is the cytoplasm. Functionally, component of the ribosome, a large ribonucleoprotein complex responsible for the synthesis of proteins in the cell. The small ribosomal subunit (SSU) binds messenger RNAs (mRNAs) and translates the encoded message by selecting cognate aminoacyl-transfer RNA (tRNA) molecules. The large subunit (LSU) contains the ribosomal catalytic site termed the peptidyl transferase center (PTC), which catalyzes the formation of peptide bonds, thereby polymerizing the amino acids delivered by tRNAs into a polypeptide chain. The nascent polypeptides leave the ribosome through a tunnel in the LSU and interact with protein factors that function in enzymatic processing, targeting, and the membrane insertion of nascent chains at the exit of the ribosomal tunnel. eS21 is required for the processing of the 20S rRNA-precursor to mature 18S rRNA in a late step of the maturation of 40S ribosomal subunits. Has a physiological role leading to 18S rRNA stability. This chain is Small ribosomal subunit protein eS21B, found in Saccharomyces cerevisiae (strain ATCC 204508 / S288c) (Baker's yeast).